A 133-amino-acid chain; its full sequence is Nickel-responsive regulator (133 aa).

4 residues coordinate Ni(2+): His76, His87, His89, and Cys95.

This sequence belongs to the transcriptional regulatory CopG/NikR family. As to quaternary structure, homotetramer. The cofactor is Ni(2+).

Its function is as follows. Transcriptional repressor of the nikABCDE operon. Is active in the presence of excessive concentrations of intracellular nickel. The polypeptide is Nickel-responsive regulator (Shigella dysenteriae serotype 1 (strain Sd197)).